Consider the following 359-residue polypeptide: Palmitoyltransferase PFA5 (359 aa).

4 helical membrane-spanning segments follow: residues 10 to 30 (WWYS…AIAY), 47 to 67 (AAAI…WIIW), 164 to 184 (LFNQ…VSVV), and 206 to 226 (LVVL…FISF). A DHHC domain is found at 120–170 (VWCSVCQSLKGLRTHHSVHLGFCVPRLDHYCVWLGTVIGRRNYRLFNQFLM).

It belongs to the DHHC palmitoyltransferase family. PFA5 subfamily. Post-translationally, autopalmitoylated.

The protein localises to the membrane. The enzyme catalyses L-cysteinyl-[protein] + hexadecanoyl-CoA = S-hexadecanoyl-L-cysteinyl-[protein] + CoA. This is Palmitoyltransferase PFA5 (PFA5) from Eremothecium gossypii (strain ATCC 10895 / CBS 109.51 / FGSC 9923 / NRRL Y-1056) (Yeast).